Here is a 190-residue protein sequence, read N- to C-terminus: Adenylate kinase (190 aa).

11-16 provides a ligand contact to ATP; that stretch reads GSGKGT. An NMP region spans residues 31–60; that stretch reads STGDVLRGEMKAETELGKIAKDYIEKGQLV. AMP contacts are provided by residues T32, R37, 58–60, 86–89, and Q93; these read QLV and GFPR. The tract at residues 127–137 is LID; it reads ERGKVSGRSDD. ATP is bound at residue R128. 2 residues coordinate AMP: R134 and R145. G173 is a binding site for ATP.

It belongs to the adenylate kinase family. As to quaternary structure, monomer.

The protein resides in the cytoplasm. It carries out the reaction AMP + ATP = 2 ADP. Its pathway is purine metabolism; AMP biosynthesis via salvage pathway; AMP from ADP: step 1/1. Functionally, catalyzes the reversible transfer of the terminal phosphate group between ATP and AMP. Plays an important role in cellular energy homeostasis and in adenine nucleotide metabolism. This is Adenylate kinase from Parabacteroides distasonis (strain ATCC 8503 / DSM 20701 / CIP 104284 / JCM 5825 / NCTC 11152).